We begin with the raw amino-acid sequence, 273 residues long: Cell division cycle-associated protein 3 (273 aa).

Disordered regions lie at residues methionine 1–glutamate 231 and glycine 251–serine 273. Serine 29 and serine 31 each carry phosphoserine. Residues alanine 32–proline 45 show a composition bias toward polar residues. Threonine 37 carries the post-translational modification Phosphothreonine. A phosphoserine mark is found at serine 44 and serine 67. At threonine 75 the chain carries Phosphothreonine. An F-box-like region spans residues lysine 90–serine 124. Serine 93 carries the phosphoserine modification. Residues glutamate 94–valine 105 are compositionally biased toward acidic residues. Composition is skewed to polar residues over residues proline 144–glutamine 154 and serine 164–aspartate 175. Phosphoserine is present on serine 204. Position 207 is a phosphothreonine (threonine 207). The segment covering glutamine 210–leucine 220 has biased composition (polar residues). Serine 214 carries the post-translational modification Phosphoserine. The residue at position 217 (threonine 217) is a Phosphothreonine. The short motif at lysine 263–asparagine 265 is the KEN box element.

In terms of assembly, interacts with SKP1. Part of a SCF (SKP1-cullin-F-box) protein ligase complex. In terms of processing, ubiquitinated and degraded by the APC/C-Cdh1 complex.

The protein resides in the cytoplasm. The protein localises to the cytosol. The protein operates within protein modification; protein ubiquitination. Its function is as follows. F-box-like protein which is required for entry into mitosis. Acts by participating in E3 ligase complexes that mediate the ubiquitination and degradation of WEE1 kinase at G2/M phase. The chain is Cell division cycle-associated protein 3 (Cdca3) from Rattus norvegicus (Rat).